The sequence spans 249 residues: MSDENTTHFGFETVNAADKAERVAGVFHSVAAKYDLMNDVMSGGIHRLWKKFTIELSGVRPGDRVLDIAGGTGDLTAKFARLVGDEGQVVLADINDSMLKVGRDKLVDKGFLGNVQYAQADAQFLPFPDNTFDCITIAFGLRNVTDKDMALAAMNRVLKPGGRLLVLEFSKPQNSLLEKAYDLYSFNVLPMMGKLITQDADSYRYLAESIRMHPDQQTLKGMMENAGFAQCRYYNMTGGIVALHKGTKA.

S-adenosyl-L-methionine is bound by residues Thr72, Asp93, and 121 to 122; that span reads DA.

This sequence belongs to the class I-like SAM-binding methyltransferase superfamily. MenG/UbiE family.

It catalyses the reaction a 2-demethylmenaquinol + S-adenosyl-L-methionine = a menaquinol + S-adenosyl-L-homocysteine + H(+). The enzyme catalyses a 2-methoxy-6-(all-trans-polyprenyl)benzene-1,4-diol + S-adenosyl-L-methionine = a 5-methoxy-2-methyl-3-(all-trans-polyprenyl)benzene-1,4-diol + S-adenosyl-L-homocysteine + H(+). Its pathway is quinol/quinone metabolism; menaquinone biosynthesis; menaquinol from 1,4-dihydroxy-2-naphthoate: step 2/2. It functions in the pathway cofactor biosynthesis; ubiquinone biosynthesis. Functionally, methyltransferase required for the conversion of demethylmenaquinol (DMKH2) to menaquinol (MKH2) and the conversion of 2-polyprenyl-6-methoxy-1,4-benzoquinol (DDMQH2) to 2-polyprenyl-3-methyl-6-methoxy-1,4-benzoquinol (DMQH2). The polypeptide is Ubiquinone/menaquinone biosynthesis C-methyltransferase UbiE (Teredinibacter turnerae (strain ATCC 39867 / T7901)).